We begin with the raw amino-acid sequence, 1637 residues long: MADDEAAVLPPPPPLPPPCRPHRQLRPRGSRPTADTTPRTSQLVEVFEAALRGNTIAVLDTGSGKTMVAVMLAREHARRVRAGEAPRRIVVFLAPTVHLVHQQFEVIREYTDLDVMMCSGASRVGEWGADHWKEEVGRNEIVVMTPQILLDALRHAFLTMSAVSLLIFDECHRACGSHPYARIMKEFYFGSQWRPDVFGMTASPVATKGASTLHNCEAHISQLELTLDAKIYIVEDRNELESFSPPTTIVNKYYDAYMVDFDNLKSKLQIFSDEFDSLLVGLQESPSNKFKDTDNILETSRKSLSRYHGKILYSLNDLGPIITSEVVKIHIESVKPLCDSEDCIFSKASLCLHMSYFKEALSLIEEILPQGYGELMKSESGSEELTKRGYISSKVNTLINIFKSFGSSNEVLCLIFVDRIITAKAVERFMRGIVNFSCFSISYLTGGSTSKDALSPAVQRFTLDLFRAGKVNLLFTTDVTEEGVDVPNCSCVIRFDLPRTVCSYVQSRGRARRNNSEFILMIERGNLQQQEHIFRMIQTGYYVKNCALYRHPNALSYDLSIQGMYTYQVQSTGATITADCCVNLIRKYCEKLPKDRYFMPKPSFEVTIEDGLFKCTLTLPRNAAFQSIVGPLSSSSNLSKQLVSLEACKKLHQLGELNDHLVPLTEEPMDTDFTTADEKCISGPGTTKRKELHGTTCVLALSGTWIHDSENITLNTYRIDFLCDQEGENYAGFVLLMEPELDDDVAPSKMDLFLIPNKMVYTTVTPRGKVQLNKKQLGKGKLFQEFFFNGIFGRLFHGSRKSGAQRDFIFKKGHEIQWNTESMYLLLPLRDSSYIQDDLSIHWEAIESCAGAVEQLWSSYQGDENVIPVNCIPQKRRGGQEEIIHLANKSLHCSSIKDSVVLSLHTGRIYTVLDLILDTTAEDSFDEMCKGKASPFTSFVDYYHQKYGIIIQHPEQPLLLLKQSHNAHNLLFSKLKYLDGSTGKPLLMEKEQIHARVPPELLIHLDVTTDILKSFYLLPSVIHRLQSLMLASQLRREIGYNQHIPVTLILEAITTLRCCETFSLERLELLGDSVLKYVVGCDLFLRYPMKHEGQLSDMRSKAVCNATLHKHGIWRSLQGYVRDNAFDPRRWVAPGQISLRPFPCNCGIETAFVPSHRRYIRDDPSFFVGKPCDRGHRWMCSKTISDCVEALVGAYYVGGGIAAALWVMRWFGIDIKCDMKLLQEVKFNASHLCSLSKINDIEELEAKLKYNFSVKGLLLEAITHPSLQELGVDYCYQRLEFLGDSVLDLLLTRHLYATHTDVDPGELTDLRSALVSNENFAQAVVRNNIHSHLQHGSGILLEQITEYVRSNLECQGKESEFLQHTTCKVPKVLGDIMESIAGAVFIDTDFNVDMVWEIFEPLLSPLITPDKLALPPYRELLELCSHIGCFLNSKCTSKGEEVIIEMSLQLRDELLVAQGHDRNKKRAKAKAASRILADLKQQGLSIKQCLSKAKQLDIVTSDLQFDLTSSGTQLSYSDLNDYHILEGLSSVKKEVVLPLKMEKGGPRSALFKLCKILQWPMPEFEFVEQRFRTPIVMDGATTTNFNSFVSTITLHIPDATTITFQGERRTDKKSAQDSASLMMLHKLQELKICICKT.

Residues 1–40 are disordered; that stretch reads MADDEAAVLPPPPPLPPPCRPHRQLRPRGSRPTADTTPRT. Residues 9–19 show a composition bias toward pro residues; sequence LPPPPPLPPPC. The span at 20 to 29 shows a compositional bias: basic residues; the sequence is RPHRQLRPRG. The Helicase ATP-binding domain maps to 46-222; sequence VFEAALRGNT…LHNCEAHISQ (177 aa). 59-66 contributes to the ATP binding site; that stretch reads LDTGSGKT. Residues 169–172 carry the DECH box motif; that stretch reads DECH. Residues 404–556 form the Helicase C-terminal domain; sequence SFGSSNEVLC…ALYRHPNALS (153 aa). The Dicer dsRNA-binding fold domain occupies 581-671; that stretch reads CVNLIRKYCE…VPLTEEPMDT (91 aa). Positions 882–1006 constitute a PAZ domain; it reads EIIHLANKSL…VPPELLIHLD (125 aa). An RNase III 1 domain is found at 1031–1200; that stretch reads ASQLRREIGY…LVGAYYVGGG (170 aa). Mg(2+)-binding residues include aspartate 1214, aspartate 1309, and serine 1312. Residues 1241 to 1389 form the RNase III 2 domain; sequence IEELEAKLKY…IAGAVFIDTD (149 aa). 2 consecutive DRBM domains span residues 1412-1481 and 1545-1629; these read LALP…DLKQ and GPRS…KLQE.

The protein belongs to the helicase family. Dicer subfamily. May interact with ARGONAUTE1 or PINHEAD through their common PAZ domains. Mg(2+) is required as a cofactor. It depends on Mn(2+) as a cofactor.

Its subcellular location is the nucleus. Probably involved in the RNA silencing pathway. May cleave double-stranded RNA to produce short 21-24 nucleotides (nt) RNAs which target the selective destruction of complementary RNAs. In Oryza sativa subsp. japonica (Rice), this protein is Endoribonuclease Dicer homolog 3b (DCL3B).